The sequence spans 385 residues: MVSIAAKSLPKLSGAVFGQFSRRKQLIQRHWLDTRTDQYYDVLRRIVVPECKNIASDVPEYPERIEKLLYYTNPAFSDAWNFTTELIYRTVADESHQTEENITKMYLIRATMDLLFTMSAVLDDISDRSEFRKGKKGWHMICQGGESTALYDGTQMGLFPLYLLKQYFKNDPGYSRLLETVVMTYIKLTIGQTIDVLGQFKKSPSMAEYKRINYYKAGQFVAAGSELAVIHAGITSQDLIDKTVEIFTIAGQIIQTWDDFNDYYSSSEQNGKLSCDFMNAGTTWVSAKAMEVFTPSQAVKFMECYGSDDQSKMKTVQELYDEIDMPKLYTEYVLENYNRCETLIKELPHDRLREACSSYMEWLVVRETPDEDSEHKVALCLNISG.

Mg(2+)-binding residues include Asp-123 and Asp-127. The short motif at 123-127 (DDISD) is the DDXXD motif element.

This sequence belongs to the terpene synthase family. Mg(2+) serves as cofactor. As to expression, specifically expressed in tissues lining the cuticle of the abdominal sternites of mature males.

The enzyme catalyses (2E,6E)-farnesyl diphosphate + H2O = (1S,6S,7R)-sesquipiperitol + diphosphate. It functions in the pathway pheromone biosynthesis. Its function is as follows. Sesquiterpene alcohol synthase that catalyzes the formation of (1S,6S,7R)-sesquipiperitol, a terpene intermediate in murgantiol biosynthesis, a male-released aggregation pheromone. This Murgantia histrionica (Harlequin bug) protein is Sesquiterpene alcohol synthase.